A 308-amino-acid polypeptide reads, in one-letter code: Ribonuclease Z (308 aa).

Residues histidine 61, histidine 63, aspartate 65, histidine 66, histidine 139, aspartate 210, and histidine 268 each coordinate Zn(2+). Aspartate 65 functions as the Proton acceptor in the catalytic mechanism.

It belongs to the RNase Z family. Homodimer. The cofactor is Zn(2+).

It catalyses the reaction Endonucleolytic cleavage of RNA, removing extra 3' nucleotides from tRNA precursor, generating 3' termini of tRNAs. A 3'-hydroxy group is left at the tRNA terminus and a 5'-phosphoryl group is left at the trailer molecule.. Zinc phosphodiesterase, which displays some tRNA 3'-processing endonuclease activity. Probably involved in tRNA maturation, by removing a 3'-trailer from precursor tRNA. In Halobacterium salinarum (strain ATCC 700922 / JCM 11081 / NRC-1) (Halobacterium halobium), this protein is Ribonuclease Z.